The chain runs to 362 residues: Cobalt-precorrin-5B C(1)-methyltransferase (362 aa).

It belongs to the CbiD family.

It catalyses the reaction Co-precorrin-5B + S-adenosyl-L-methionine = Co-precorrin-6A + S-adenosyl-L-homocysteine. It participates in cofactor biosynthesis; adenosylcobalamin biosynthesis; cob(II)yrinate a,c-diamide from sirohydrochlorin (anaerobic route): step 6/10. Its function is as follows. Catalyzes the methylation of C-1 in cobalt-precorrin-5B to form cobalt-precorrin-6A. The polypeptide is Cobalt-precorrin-5B C(1)-methyltransferase (Methanocaldococcus jannaschii (strain ATCC 43067 / DSM 2661 / JAL-1 / JCM 10045 / NBRC 100440) (Methanococcus jannaschii)).